A 64-amino-acid chain; its full sequence is Conotoxin Im11.2 (64 aa).

Residues 1–26 (MMFRLTSVSCFLLVIVCLNLVVLTNA) form the signal peptide. 4 disulfides stabilise this stretch: Cys27–Cys41, Cys34–Cys46, Cys40–Cys50, and Cys45–Cys54. Asp57 is modified (aspartic acid 1-amide). A propeptide spanning residues 61-64 (ATFQ) is cleaved from the precursor.

It belongs to the conotoxin I2 superfamily. In terms of tissue distribution, expressed by the venom duct.

Its subcellular location is the secreted. This is Conotoxin Im11.2 from Conus imperialis (Imperial cone).